The following is an 809-amino-acid chain: G-type lectin S-receptor-like serine/threonine-protein kinase At1g61480 (809 aa).

Positions 1-24 (MGKKRIMFFASLLLITIFLSFSYA) are cleaved as a signal peptide. A Bulb-type lectin domain is found at 25-144 (GITRESPLSI…NSGRTLWESF (120 aa)). Over 25–425 (GITRESPLSI…SELGGNKRNK (401 aa)) the chain is Extracellular. N-linked (GlcNAc...) asparagine glycosylation is found at N53, N88, N94, N103, N117, N134, and N236. The 37-residue stretch at 278–314 (PENSCDIYGFCGPFGICVMSVPPKCKCFKGFVPKSIE) folds into the EGF-like domain. Disulfide bonds link C282–C294 and C288–C302. 2 N-linked (GlcNAc...) asparagine glycosylation sites follow: N320 and N375. A PAN domain is found at 333–415 (CQGNTNGKTV…GEILSIRLAS (83 aa)). 2 cysteine pairs are disulfide-bonded: C368–C389 and C372–C378. A helical membrane pass occupies residues 426–446 (IIVASIVSLSLFVILAFAAFC). Residues 447 to 809 (FLRYKVKHTV…EMTQSVILGR (363 aa)) are Cytoplasmic-facing. The Protein kinase domain occupies 496–781 (FSLSNKLGQG…DLTSPKQPTF (286 aa)). Residues 502-510 (LGQGGFGSV) and K524 each bind ATP. Phosphoserine is present on residues S530 and S545. The interval 585–602 (RKRLEIDWPKRFNIIEGI) is caM-binding. Residue D621 is the Proton acceptor of the active site. S625 and S638 each carry phosphoserine. T655 carries the phosphothreonine modification. A phosphoserine mark is found at S698 and S792.

It belongs to the protein kinase superfamily. Ser/Thr protein kinase family.

The protein resides in the cell membrane. It catalyses the reaction L-seryl-[protein] + ATP = O-phospho-L-seryl-[protein] + ADP + H(+). It carries out the reaction L-threonyl-[protein] + ATP = O-phospho-L-threonyl-[protein] + ADP + H(+). The sequence is that of G-type lectin S-receptor-like serine/threonine-protein kinase At1g61480 from Arabidopsis thaliana (Mouse-ear cress).